The following is a 109-amino-acid chain: Small ribosomal subunit protein eS25 (109 aa).

Positions 1-36 are disordered; that stretch reads MGGASKKPISTVEKRMKKMAEEQQKKQQKRATTKTG. Positions 12–25 are enriched in basic and acidic residues; the sequence is VEKRMKKMAEEQQK.

It belongs to the eukaryotic ribosomal protein eS25 family.

This is Small ribosomal subunit protein eS25 (rps25e) from Sulfurisphaera tokodaii (strain DSM 16993 / JCM 10545 / NBRC 100140 / 7) (Sulfolobus tokodaii).